The sequence spans 53 residues: Weak toxin NWT (53 aa).

3 disulfide bridges follow: C6–C11, C17–C33, and C37–C48.

This sequence belongs to the three-finger toxin family. Ancestral subfamily. Orphan group II sub-subfamily. Expressed by the venom gland.

The protein resides in the secreted. Its function is as follows. Binds with low affinity and weakly inhibits muscle nicotinic acetylcholine receptor (nAChR). The chain is Weak toxin NWT from Naja kaouthia (Monocled cobra).